The chain runs to 272 residues: 3-methyl-2-oxobutanoate hydroxymethyltransferase (272 aa).

Asp51 and Asp90 together coordinate Mg(2+). 3-methyl-2-oxobutanoate-binding positions include 51 to 52 (DS), Asp90, and Lys118. Glu120 lines the Mg(2+) pocket. The active-site Proton acceptor is the Glu187.

It belongs to the PanB family. Homodecamer; pentamer of dimers. Mg(2+) serves as cofactor.

It localises to the cytoplasm. The catalysed reaction is 3-methyl-2-oxobutanoate + (6R)-5,10-methylene-5,6,7,8-tetrahydrofolate + H2O = 2-dehydropantoate + (6S)-5,6,7,8-tetrahydrofolate. It functions in the pathway cofactor biosynthesis; (R)-pantothenate biosynthesis; (R)-pantoate from 3-methyl-2-oxobutanoate: step 1/2. Its function is as follows. Catalyzes the reversible reaction in which hydroxymethyl group from 5,10-methylenetetrahydrofolate is transferred onto alpha-ketoisovalerate to form ketopantoate. This chain is 3-methyl-2-oxobutanoate hydroxymethyltransferase, found in Xylella fastidiosa (strain 9a5c).